A 448-amino-acid chain; its full sequence is RNA-binding protein 42 (448 aa).

The interval 1-29 (MAGAGPAPGLPGAGGPVVPGPGAGIPGKS) is disordered. A2 is subject to N-acetylalanine. A compositionally biased stretch (gly residues) spans 11 to 27 (PGAGGPVVPGPGAGIPG). At S132 the chain carries Phosphoserine. R149 is modified (asymmetric dimethylarginine). A necessary for interaction with HNRNPK region spans residues 204-448 (ELGLGLGLGL…QKEKKKLGLR (245 aa)). A disordered region spans residues 286–324 (LSLRPRPRPPRPEPPPGLMALEVPEPLSEDKKKGKPEKL). Residues 313–324 (SEDKKKGKPEKL) are compositionally biased toward basic and acidic residues. The RRM domain occupies 349–427 (FRIFCGDLGN…RPIKLRKSMW (79 aa)).

It belongs to the RRM RBM42 family. In terms of assembly, interacts with HNRNPK.

It localises to the nucleus. The protein localises to the cytoplasm. Its function is as follows. Binds (via the RRM domain) to the 3'-untranslated region (UTR) of CDKN1A mRNA. The sequence is that of RNA-binding protein 42 (RBM42) from Bos taurus (Bovine).